A 226-amino-acid polypeptide reads, in one-letter code: Probable transaldolase (226 aa).

Lys91 (schiff-base intermediate with substrate) is an active-site residue.

It belongs to the transaldolase family. Type 3B subfamily.

The protein localises to the cytoplasm. The catalysed reaction is D-sedoheptulose 7-phosphate + D-glyceraldehyde 3-phosphate = D-erythrose 4-phosphate + beta-D-fructose 6-phosphate. Its pathway is carbohydrate degradation; pentose phosphate pathway; D-glyceraldehyde 3-phosphate and beta-D-fructose 6-phosphate from D-ribose 5-phosphate and D-xylulose 5-phosphate (non-oxidative stage): step 2/3. Transaldolase is important for the balance of metabolites in the pentose-phosphate pathway. The sequence is that of Probable transaldolase from Chlorobium phaeobacteroides (strain DSM 266 / SMG 266 / 2430).